A 302-amino-acid chain; its full sequence is Sushi domain-containing protein 6 (302 aa).

An N-terminal signal peptide occupies residues 1-39 (MCHGKIAPKSSSEFVVTSVGHGVFLQLVILCALLGDGLA). The 65-residue stretch at 40 to 104 (SVCPLPPEPE…TPAMEVSCHL (65 aa)) folds into the Sushi domain. 2 cysteine pairs are disulfide-bonded: C42-C89 and C74-C102. A helical membrane pass occupies residues 120–140 (IVASTASSVALILLLVVLFVL). 2 disordered regions span residues 202–241 (GSAP…CEAW) and 256–302 (TSSW…LKEA). Polar residues-rich tracts occupy residues 212-222 (REQQLQGQEAC), 256-267 (TSSWVAGSGSSR), and 279-290 (SDIQSLLSLTSE).

The protein resides in the membrane. Functionally, may play a role in growth-suppressive activity and cell death. May be involved in the production of chemokine molecules in umbilical vein endothelial cells (HUVECs) cultured in THP1 monocyte LPS-induced medium. Plays a role in preventing tumor onset. The sequence is that of Sushi domain-containing protein 6 from Mus musculus (Mouse).